The following is a 500-amino-acid chain: Probable cytosol aminopeptidase (500 aa).

Mn(2+) is bound by residues lysine 274 and aspartate 279. Lysine 286 is an active-site residue. Mn(2+) is bound by residues aspartate 297, aspartate 356, and glutamate 358. Residue arginine 360 is part of the active site.

Belongs to the peptidase M17 family. It depends on Mn(2+) as a cofactor.

The protein localises to the cytoplasm. It catalyses the reaction Release of an N-terminal amino acid, Xaa-|-Yaa-, in which Xaa is preferably Leu, but may be other amino acids including Pro although not Arg or Lys, and Yaa may be Pro. Amino acid amides and methyl esters are also readily hydrolyzed, but rates on arylamides are exceedingly low.. The catalysed reaction is Release of an N-terminal amino acid, preferentially leucine, but not glutamic or aspartic acids.. Presumably involved in the processing and regular turnover of intracellular proteins. Catalyzes the removal of unsubstituted N-terminal amino acids from various peptides. This chain is Probable cytosol aminopeptidase, found in Saccharophagus degradans (strain 2-40 / ATCC 43961 / DSM 17024).